The primary structure comprises 155 residues: Nascent polypeptide-associated complex subunit beta (155 aa).

Disordered stretches follow at residues 1-39 (MDQAKLARLQQSVRIGTGKGTPRRKTKKVHKSSGTDDKK) and 122-155 (QNMQKKEGEAKKEGEEDDEDIPDLVGETFESKVE). Over residues 21–31 (TPRRKTKKVHK) the composition is skewed to basic residues. The NAC-A/B domain occupies 34-99 (GTDDKKLQTS…GEEKELTELV (66 aa)). Basic and acidic residues predominate over residues 125–135 (QKKEGEAKKEG).

Belongs to the NAC-beta family. Part of the nascent polypeptide-associated complex (NAC), consisting of EGD2 and EGD1. NAC associates with ribosomes via EGD1.

It is found in the cytoplasm. It localises to the nucleus. Component of the nascent polypeptide-associated complex (NAC), a dynamic component of the ribosomal exit tunnel, protecting the emerging polypeptides from interaction with other cytoplasmic proteins to ensure appropriate nascent protein targeting. The NAC complex also promotes mitochondrial protein import by enhancing productive ribosome interactions with the outer mitochondrial membrane and blocks the inappropriate interaction of ribosomes translating non-secretory nascent polypeptides with translocation sites in the membrane of the endoplasmic reticulum. EGD1 may act as a transcription factor that exert a negative effect on the expression of several genes that are transcribed by RNA polymerase II. This is Nascent polypeptide-associated complex subunit beta (EGD1) from Coccidioides immitis (strain RS) (Valley fever fungus).